Here is a 276-residue protein sequence, read N- to C-terminus: Elongation factor Ts (276 aa).

Residues 79–82 (TDFV) form an involved in Mg(2+) ion dislocation from EF-Tu region.

This sequence belongs to the EF-Ts family.

The protein localises to the cytoplasm. Associates with the EF-Tu.GDP complex and induces the exchange of GDP to GTP. It remains bound to the aminoacyl-tRNA.EF-Tu.GTP complex up to the GTP hydrolysis stage on the ribosome. The chain is Elongation factor Ts from Buchnera aphidicola subsp. Cinara cedri (strain Cc).